Consider the following 544-residue polypeptide: MSRCAQAAEVAATVPGAGVGNVGLRPPMVPRQASFFPPPVPNPFVQQTQIGSARRVQIVLLGIILLPIRVLLVALILLLAWPFAAISTVCCPEKLTHPITGWRRKITQTALKFLGRAMFFSMGFIVAVKGKIASPLEAPVFVAAPHSTFFDGIACVVAGLPSMVSRNENAQVPLIGRLLRAVQPVLVSRVDPDSRKNTINEIIKRTTSGGEWPQILVFPEGTCTNRSCLITFKPGAFIPGVPVQPVLLRYPNKLDTVTWTWQGYTFIQLCMLTFCQLFTKVEVEFMPVQVPNDEEKNDPVLFANKVRNLMAEALGIPVTDHTYEDCRLMISAGQLTLPMEAGLVEFTKISRKLKLDWDGVRKHLDEYASIASSSKGGRIGIEEFAKYLKLPVSDVLRQLFALFDRNHDGSIDFREYVIGLAVLCNPSNTEEIIQVAFKLFDVDEDGYITEEEFSTILQASLGVPDLDVSGLFKEIAQGDSISYEEFKSFALKHPEYAKIFTTYLDLQTCHVFSLPKEVQTTPSTASNKVSPEKHEESTSDKKDD.

At 1-57 (MSRCAQAAEVAATVPGAGVGNVGLRPPMVPRQASFFPPPVPNPFVQQTQIGSARRVQ) the chain is on the cytoplasmic side. A helical; Signal-anchor for type II membrane protein membrane pass occupies residues 58 to 78 (IVLLGIILLPIRVLLVALILL). Topologically, residues 79 to 544 (LAWPFAAIST…EESTSDKKDD (466 aa)) are lumenal. The short motif at 146 to 151 (HSTFFD) is the HXXXXD motif element. The EGTC motif signature appears at 220 to 223 (EGTC). EF-hand domains are found at residues 391–426 (PVSD…LCNP) and 428–463 (NTEE…SLGV). Positions 404, 406, 408, 410, 415, 441, 443, 445, 447, and 452 each coordinate Ca(2+). Residues 518–529 (VQTTPSTASNKV) are compositionally biased toward polar residues. The tract at residues 518 to 544 (VQTTPSTASNKVSPEKHEESTSDKKDD) is disordered. Residues 530 to 544 (SPEKHEESTSDKKDD) show a composition bias toward basic and acidic residues.

Belongs to the 1-acyl-sn-glycerol-3-phosphate acyltransferase family.

It is found in the endoplasmic reticulum membrane. The protein localises to the golgi apparatus membrane. Its subcellular location is the cell membrane. It localises to the lipid droplet. The catalysed reaction is a 1-acyl-sn-glycero-3-phosphocholine + an acyl-CoA = a 1,2-diacyl-sn-glycero-3-phosphocholine + CoA. It catalyses the reaction a 1-O-alkyl-sn-glycero-3-phosphocholine + acetyl-CoA = a 1-O-alkyl-2-acetyl-sn-glycero-3-phosphocholine + CoA. The enzyme catalyses a 1-acyl-sn-glycero-3-phosphate + an acyl-CoA = a 1,2-diacyl-sn-glycero-3-phosphate + CoA. It carries out the reaction a 1-O-(1Z-alkenyl)-sn-glycero-3-phosphocholine + an acyl-CoA = a 1-O-(1Z-alkenyl)-2-acyl-sn-glycero-3-phosphocholine + CoA. The catalysed reaction is 1-hexadecanoyl-sn-glycero-3-phosphate + (9Z)-octadecenoyl-CoA = 1-hexadecanoyl-2-(9Z-octadecenoyl)-sn-glycero-3-phosphate + CoA. It catalyses the reaction 1-(9Z-octadecenoyl)-sn-glycero-3-phosphate + (9Z)-octadecenoyl-CoA = 1,2-di-(9Z-octadecenoyl)-sn-glycero-3-phosphate + CoA. The enzyme catalyses 1-(9Z-octadecenoyl)-sn-glycero-3-phosphate + hexadecanoyl-CoA = 1-(9Z)-octadecenoyl-2-hexadecanoyl-sn-glycero-3-phosphate + CoA. It carries out the reaction 1-heptadecanoyl-sn-glycero-3-phosphate + (9Z)-octadecenoyl-CoA = 1-heptadecanoyl-2-(9Z)-octadecenoyl-sn-glycero-3-phosphate + CoA. The catalysed reaction is 1-octadecanoyl-sn-glycero-3-phosphate + (9Z)-octadecenoyl-CoA = 1-octadecanoyl-2-(9Z-octadecenoyl)-sn-glycero-3-phosphate + CoA. It catalyses the reaction heptadecanoyl-CoA + 1-(9Z-octadecenoyl)-sn-glycero-3-phosphate = 1-(9Z)-octadecenoyl-2-heptadecanoyl-sn-glycero-3-phosphate + CoA. The enzyme catalyses 1-(9Z-octadecenoyl)-sn-glycero-3-phosphate + (9Z,12Z)-octadecadienoyl-CoA = 1-(9Z)-octadecenoyl-2-(9Z,12Z)-octadecadienoyl-sn-glycero-3-phosphate + CoA. It carries out the reaction 1-(9Z-octadecenoyl)-sn-glycero-3-phosphate + tetradecanoyl-CoA = 1-(9Z)-octadecenoyl-2-tetradecanoyl-sn-glycero-3-phosphate + CoA. The catalysed reaction is pentadecanoyl-CoA + 1-(9Z-octadecenoyl)-sn-glycero-3-phosphate = 1-(9Z)-octadecenoyl-2-pentadecanoyl-sn-glycero-3-phosphate + CoA. It catalyses the reaction nonadecanoyl-CoA + 1-(9Z-octadecenoyl)-sn-glycero-3-phosphate = 1-(9Z)-octadecenoyl-2-nonadecanoyl-sn-glycero-3-phosphate + CoA. The enzyme catalyses 1-hexadecanoyl-sn-glycero-3-phosphocholine + (9Z)-octadecenoyl-CoA = 1-hexadecanoyl-2-(9Z-octadecenoyl)-sn-glycero-3-phosphocholine + CoA. It carries out the reaction 1-O-hexadecyl-sn-glycero-3-phosphocholine + acetyl-CoA = 1-O-hexadecyl-2-acetyl-sn-glycero-3-phosphocholine + CoA. The catalysed reaction is 1-O-octadecyl-sn-glycero-3-phosphocholine + acetyl-CoA = 1-O-octadecyl-2-acetyl-sn-glycero-3-phosphocholine + CoA. It catalyses the reaction 1-hexadecanoyl-sn-glycero-3-phosphocholine + acetyl-CoA = 1-hexadecanoyl-2-acetyl-sn-glycero-3-phosphocholine + CoA. The enzyme catalyses 1-octadecanoyl-sn-glycero-3-phosphocholine + acetyl-CoA = 1-octadecanoyl-2-acetyl-sn-glycero-3-phosphocholine + CoA. It carries out the reaction a 1-O-(1Z-alkenyl)-sn-glycero-3-phosphocholine + acetyl-CoA = 1-O-(1Z)-alkenyl-2-acetyl-sn-glycero-3-phosphocholine + CoA. The catalysed reaction is 1-O-octadecyl-sn-glycero-3-phosphocholine + (5Z,8Z,11Z,14Z)-eicosatetraenoyl-CoA = 1-O-octadecyl-2-(5Z,8Z,11Z,14Z)-eicosatetraenoyl-sn-glycero-3-phosphocholine + CoA. The protein operates within lipid metabolism; phospholipid metabolism. In terms of biological role, exhibits both acyltransferase and acetyltransferase activities. Catalyzes the conversion of lysophosphatidylcholine (1-acyl-sn-glycero-3-phosphocholine or LPC) into phosphatidylcholine (1,2-diacyl-sn-glycero-3-phosphocholine or PC). Catalyzes the conversion 1-acyl-sn-glycerol-3-phosphate (lysophosphatidic acid or LPA) into 1,2-diacyl-sn-glycerol-3-phosphate (phosphatidic acid or PA) by incorporating an acyl moiety at the sn-2 position of the glycerol backbone. Involved in platelet-activating factor (PAF) biosynthesis by catalyzing the conversion of the PAF precursor, 1-O-alkyl-sn-glycero-3-phosphocholine (lyso-PAF) into 1-O-alkyl-2-acetyl-sn-glycero-3-phosphocholine (PAF). Also converts lyso-PAF to 1-O-alkyl-2-acyl-sn-glycero-3-phosphocholine (PC), a major component of cell membranes and a PAF precursor. Under resting conditions, acyltransferase activity is preferred. Upon acute inflammatory stimulus, acetyltransferase activity is enhanced and PAF synthesis increases. Involved in the regulation of lipid droplet number and size. The chain is Lysophosphatidylcholine acyltransferase 2 (LPCAT2) from Homo sapiens (Human).